The chain runs to 371 residues: Transaldolase (371 aa).

Residue Lys-140 is the Schiff-base intermediate with substrate of the active site.

Belongs to the transaldolase family. Type 2 subfamily.

The protein resides in the cytoplasm. The catalysed reaction is D-sedoheptulose 7-phosphate + D-glyceraldehyde 3-phosphate = D-erythrose 4-phosphate + beta-D-fructose 6-phosphate. It functions in the pathway carbohydrate degradation; pentose phosphate pathway; D-glyceraldehyde 3-phosphate and beta-D-fructose 6-phosphate from D-ribose 5-phosphate and D-xylulose 5-phosphate (non-oxidative stage): step 2/3. In terms of biological role, transaldolase is important for the balance of metabolites in the pentose-phosphate pathway. This chain is Transaldolase, found in Arthrobacter sp. (strain FB24).